An 811-amino-acid polypeptide reads, in one-letter code: Transmembrane protease serine 6 (811 aa).

The Cytoplasmic portion of the chain corresponds to 1–55 (MLLLFHSKRMPVAEAPQVAGGQGDGGDGEEAEPEGMFKACEDSKRKARGYLRLVP). The helical; Signal-anchor for type II membrane protein transmembrane segment at 56–76 (LFVLLALLVLASAGVLLWYFL) threads the bilayer. Residues 77 to 811 (GYKAEVMVSQ…VISWIQQVVT (735 aa)) lie on the Extracellular side of the membrane. One can recognise an SEA domain in the interval 84-209 (VSQVYSGSLR…EGLVILEASV (126 aa)). N-linked (GlcNAc...) asparagine glycosylation is found at Asn136, Asn184, Asn216, Asn338, Asn433, and Asn453. 2 CUB domains span residues 213 to 336 (AALN…QACE) and 335 to 452 (CEVN…YGLY). A disulfide bond links Cys335 and Cys366. LDL-receptor class A domains follow at residues 457-489 (PCPG…ERNC), 490-526 (VCRA…EQCQ), and 530-567 (PCGT…EHCD). Intrachain disulfides connect Cys458–Cys470, Cys464–Cys480, Cys474–Cys489, Cys491–Cys503, Cys497–Cys516, Cys510–Cys525, Cys531–Cys543, Cys538–Cys557, Cys551–Cys566, and Cys602–Cys618. Asn518 carries N-linked (GlcNAc...) asparagine glycosylation. In terms of domain architecture, Peptidase S1 spans 577–811 (IVGGAVSSEG…VISWIQQVVT (235 aa)). Residues His617 and Asp668 each act as charge relay system in the active site. 3 disulfides stabilise this stretch: Cys702-Cys768, Cys733-Cys747, and Cys758-Cys787. The Charge relay system role is filled by Ser762.

This sequence belongs to the peptidase S1 family. In terms of assembly, interacts with HJV. In terms of processing, the single-chain zymogen undergoes autoproteolytic processing. This results in TMPRSS6 shedding from the cell surface and conversion into an activated two-chains form which is released extracellularly. The process involves a trans-activation mechanism that requires TMPRSS6 oligomerization.

The protein localises to the cell membrane. Functionally, membrane-bound serine protease. Through the cleavage of cell surface hemojuvelin (HJV), a regulator of the expression of the iron absorption-regulating hormone hepicidin/HAMP, plays a role in iron homeostasis. This chain is Transmembrane protease serine 6 (TMPRSS6), found in Homo sapiens (Human).